The sequence spans 532 residues: MATRDLPHSVGDFCFGWVDQIRSEITLGKSQDQLIKEDVLEDDETVETKVEIKNLWPAFASGAGLFSDGYVNAGISTVLSCLKKIYGDEFTKSNAMNNIGSIGFVGTVVGQLSFGYISDNFDRKTGMLTANVMLIFFTLMCAVASWGTTVQGFFACLTVWRFFLGIAIGAEYPTSSVIASEFANQLPSGHRNRYFSWFTNAMIDFGFVVSSFVPLVLLWIFTPRHLRAVWRLSIGLGVIPPLILFFIRLKMDNSKSFKKMNMKRVNYSKYPWWLIIKFYWFRLTVVSLIWFIYDFSVYSFGTFNTIIIGEVIPNGTLYENWGWSVVFNLFYMPGAFLGAFIGDYLGPRLTLAIGVGAQGIIGIAMSACLKSLKKHVAGFVVVFGIFSTFGEFGPGNNTGLLASKTCASSIRGQYYGIAAAIGKIGAFVGTWVFPAIQKHYAYSEDLSLQVPFYVSSALCLFSAFLTIFFVPPVGQDAINKEDRLFKEYLEENGVDIRLLGDSGVVTQYQEDEDIGVISDEKDDTVKVQQKNV.

The next 6 membrane-spanning stretches (helical) occupy residues 55–75 (LWPAFASGAGLFSDGYVNAGI), 98–118 (NIGSIGFVGTVVGQLSFGYIS), 126–146 (GMLTANVMLIFFTLMCAVASW), 150–170 (VQGFFACLTVWRFFLGIAIGA), 201–221 (AMIDFGFVVSSFVPLVLLWIF), and 229–249 (VWRLSIGLGVIPPLILFFIRL). An N-linked (GlcNAc...) asparagine glycan is attached at Asn266. Residues 272-292 (WWLIIKFYWFRLTVVSLIWFI) form a helical membrane-spanning segment. Asn314 is a glycosylation site (N-linked (GlcNAc...) asparagine). A run of 3 helical transmembrane segments spans residues 321-341 (WGWSVVFNLFYMPGAFLGAFI), 349-369 (LTLAIGVGAQGIIGIAMSACL), and 375-395 (HVAGFVVVFGIFSTFGEFGPG). N-linked (GlcNAc...) asparagine glycosylation is present at Asn396. The next 2 membrane-spanning stretches (helical) occupy residues 416-436 (GIAAAIGKIGAFVGTWVFPAI) and 450-470 (VPFYVSSALCLFSAFLTIFFV).

This sequence belongs to the major facilitator superfamily. Sugar transporter (TC 2.A.1.1) family.

The protein localises to the cell membrane. The catalysed reaction is sn-glycerol 3-phosphocholine(out) = sn-glycerol 3-phosphocholine(in). In terms of biological role, glycerophosphodiester transporter that mediates uptake of glycerophosphocholine (GroPCho) with GIT3. Does not possess detectable glycerophosphoinositol (GroPIns) transport activity. The expanded ability to utilize GroPIns and GroPCho results from the organism's pathogenic nature and its need to occupy a variety of environments within its host organism. This possibility is buttressed by the fact that GroPIns and GroPCho are present and abundant in human fluids. The protein is Glycerophosphocholine permease GIT4 of Candida albicans (strain SC5314 / ATCC MYA-2876) (Yeast).